The chain runs to 101 residues: Urease subunit beta (101 aa).

The protein belongs to the urease beta subunit family. As to quaternary structure, heterotrimer of UreA (gamma), UreB (beta) and UreC (alpha) subunits. Three heterotrimers associate to form the active enzyme.

The protein resides in the cytoplasm. It catalyses the reaction urea + 2 H2O + H(+) = hydrogencarbonate + 2 NH4(+). It participates in nitrogen metabolism; urea degradation; CO(2) and NH(3) from urea (urease route): step 1/1. The polypeptide is Urease subunit beta (Roseobacter denitrificans (strain ATCC 33942 / OCh 114) (Erythrobacter sp. (strain OCh 114))).